Here is a 407-residue protein sequence, read N- to C-terminus: Accessory Sec system protein translocase subunit SecY2 (407 aa).

Helical transmembrane passes span 13 to 33 (FLWTLLFVFIYVLGSKLTLPF), 65 to 85 (FFSIGLAPWMSSILIWQMFTV), 104 to 124 (MLLTLAIALIQSLGLVLNLPL), 133 to 153 (GTIVFLDTLILIAGTYFLIWL), 158 to 178 (SSMGLGGSIMIVMVSMISYIP), 192 to 212 (PLILALIGFFSLCFLYLAVLV), 248 to 268 (IMYAMTLVSIPQYFLMLLLFF), 287 to 307 (IPWFILYLLTIFILAWAFAFI), 345 to 365 (FAFVGALYLVLVAGLPMLLIF), and 370 to 390 (YMRLGMIPGMFMIFIGMVFSI).

It belongs to the SecY/SEC61-alpha family. SecY2 subfamily. As to quaternary structure, may form heterotrimers with SecE and SecG subunits (Potential). Component of the accessory SecA2/SecY2 protein translocase complex required to export cell wall protein GspB.

Its subcellular location is the cell membrane. Its function is as follows. The central subunit of a protein translocation channel (Potential). Part of the accessory SecA2/SecY2 system specifically required to export GspB, a serine-rich repeat cell wall protein encoded upstream in the same operon. The chain is Accessory Sec system protein translocase subunit SecY2 from Streptococcus gordonii.